The chain runs to 257 residues: Imidazole glycerol phosphate synthase subunit HisF (257 aa).

Residues D12 and D131 contribute to the active site.

Belongs to the HisA/HisF family. Heterodimer of HisH and HisF.

The protein resides in the cytoplasm. The enzyme catalyses 5-[(5-phospho-1-deoxy-D-ribulos-1-ylimino)methylamino]-1-(5-phospho-beta-D-ribosyl)imidazole-4-carboxamide + L-glutamine = D-erythro-1-(imidazol-4-yl)glycerol 3-phosphate + 5-amino-1-(5-phospho-beta-D-ribosyl)imidazole-4-carboxamide + L-glutamate + H(+). It participates in amino-acid biosynthesis; L-histidine biosynthesis; L-histidine from 5-phospho-alpha-D-ribose 1-diphosphate: step 5/9. Functionally, IGPS catalyzes the conversion of PRFAR and glutamine to IGP, AICAR and glutamate. The HisF subunit catalyzes the cyclization activity that produces IGP and AICAR from PRFAR using the ammonia provided by the HisH subunit. This Burkholderia orbicola (strain MC0-3) protein is Imidazole glycerol phosphate synthase subunit HisF.